An 89-amino-acid polypeptide reads, in one-letter code: Protein S100-A8 (89 aa).

EF-hand domains lie at 13–48 (IDVY…FVQN) and 46–81 (VQNI…VGVA). The Zn(2+) site is built by histidine 17 and histidine 27. Residue aspartate 33 coordinates Ca(2+). An S-nitrosocysteine modification is found at cysteine 42. Ca(2+)-binding residues include aspartate 59, asparagine 61, aspartate 63, and glutamate 70. Histidine 83 serves as a coordination point for Zn(2+).

The protein belongs to the S-100 family. Homodimer. Preferentially exists as a heterodimer or heterotetramer with S100A9 known as calprotectin (S100A8/A9). Calprotectin (S100A8/9) interacts with CEACAM3 and tubulin filaments in a calcium-dependent manner. Heterotetrameric calprotectin (S100A8/A9) interacts with ANXA6 and associates with tubulin filaments in activated monocytes. S100A8 and calprotectin (S100A8/9) interact with NCF2/P67PHOX, RAC1 and RAC2. Calprotectin (S100A8/9) interacts with CYBA and CYBB. S100A8 interacts with AGER, ATP2A2 and with the heterodimeric complex formed by TLR4 and LY96. Calprotectin (S100A8/9) interacts with NOS2 to form the iNOS-S100A8/A9 transnitrosylase complex. Calprotectin (S100A8/9) interacts with CD69.

It is found in the secreted. The protein localises to the cytoplasm. It localises to the cytoskeleton. Its subcellular location is the cell membrane. Calprotectin (S100A8/A9) activity on TLR4 signaling is inhibited by paquinimod. In terms of biological role, S100A8 is a calcium- and zinc-binding protein which plays a prominent role in the regulation of inflammatory processes and immune response. It can induce neutrophil chemotaxis and adhesion. Predominantly found as calprotectin (S100A8/A9) which has a wide plethora of intra- and extracellular functions. The intracellular functions include: facilitating leukocyte arachidonic acid trafficking and metabolism, modulation of the tubulin-dependent cytoskeleton during migration of phagocytes and activation of the neutrophilic NADPH-oxidase. Also participates in regulatory T-cell differentiation together with CD69. Activates NADPH-oxidase by facilitating the enzyme complex assembly at the cell membrane, transferring arachidonic acid, an essential cofactor, to the enzyme complex and S100A8 contributes to the enzyme assembly by directly binding to NCF2/P67PHOX. The extracellular functions involve pro-inflammatory, antimicrobial, oxidant-scavenging and apoptosis-inducing activities. Its pro-inflammatory activity includes recruitment of leukocytes, promotion of cytokine and chemokine production, and regulation of leukocyte adhesion and migration. Acts as an alarmin or a danger associated molecular pattern (DAMP) molecule and stimulates innate immune cells via binding to pattern recognition receptors such as Toll-like receptor 4 (TLR4) and receptor for advanced glycation endproducts (AGER). Binding to TLR4 and AGER activates the MAP-kinase and NF-kappa-B signaling pathways resulting in the amplification of the pro-inflammatory cascade. Has antimicrobial activity towards bacteria and fungi and exerts its antimicrobial activity probably via chelation of Zn(2+) which is essential for microbial growth. Can induce cell death via autophagy and apoptosis and this occurs through the cross-talk of mitochondria and lysosomes via reactive oxygen species (ROS) and the process involves BNIP3. Can regulate neutrophil number and apoptosis by an anti-apoptotic effect; regulates cell survival via ITGAM/ITGB and TLR4 and a signaling mechanism involving MEK-ERK. Its role as an oxidant scavenger has a protective role in preventing exaggerated tissue damage by scavenging oxidants. The iNOS-S100A8/A9 transnitrosylase complex is proposed to direct selective inflammatory stimulus-dependent S-nitrosylation of multiple targets such as GAPDH, ANXA5, EZR, MSN and VIM by recognizing a [IL]-x-C-x-x-[DE] motif; S100A8 seems to contribute to S-nitrosylation site selectivity. Its function is as follows. (Microbial infection) Upon infection by murine coronavirus (MHV-A59), induces expansion of aberrant immature neutrophils in a TLR4-dependent manner. This is Protein S100-A8 from Mus musculus (Mouse).